Reading from the N-terminus, the 674-residue chain is Amino-acid acetyltransferase, mitochondrial (674 aa).

Residues M1 to F50 constitute a mitochondrion transit peptide. Polar residues predominate over residues P33–S45. Residues P33–E74 are disordered. Residues G497–P665 enclose the N-acetyltransferase domain.

It belongs to the acetyltransferase family.

The protein resides in the mitochondrion. The enzyme catalyses L-glutamate + acetyl-CoA = N-acetyl-L-glutamate + CoA + H(+). Its pathway is amino-acid biosynthesis; L-arginine biosynthesis; N(2)-acetyl-L-ornithine from L-glutamate: step 1/4. N-acetylglutamate synthase involved in arginine biosynthesis. The sequence is that of Amino-acid acetyltransferase, mitochondrial (ARG2) from Podospora anserina (strain S / ATCC MYA-4624 / DSM 980 / FGSC 10383) (Pleurage anserina).